Consider the following 73-residue polypeptide: Pelophylaxin-1 (73 aa).

Positions 1-22 (MFTMKKSLLLVFFLGTIALSLC) are cleaved as a signal peptide. The propeptide occupies 23–41 (EEERGADDDNGGEITDEEI). An intrachain disulfide couples Cys-67 to Cys-73.

As to expression, expressed by the skin glands.

The protein localises to the secreted. Antimicrobial peptide. The chain is Pelophylaxin-1 from Pelophylax fukienensis (Fukien gold-striped pond frog).